We begin with the raw amino-acid sequence, 407 residues long: Phosphopentomutase (407 aa).

Residues Asp10, Asp306, His311, Asp347, His348, and His359 each contribute to the Mn(2+) site.

This sequence belongs to the phosphopentomutase family. It depends on Mn(2+) as a cofactor.

The protein localises to the cytoplasm. The enzyme catalyses 2-deoxy-alpha-D-ribose 1-phosphate = 2-deoxy-D-ribose 5-phosphate. It carries out the reaction alpha-D-ribose 1-phosphate = D-ribose 5-phosphate. The protein operates within carbohydrate degradation; 2-deoxy-D-ribose 1-phosphate degradation; D-glyceraldehyde 3-phosphate and acetaldehyde from 2-deoxy-alpha-D-ribose 1-phosphate: step 1/2. Functionally, isomerase that catalyzes the conversion of deoxy-ribose 1-phosphate (dRib-1-P) and ribose 1-phosphate (Rib-1-P) to deoxy-ribose 5-phosphate (dRib-5-P) and ribose 5-phosphate (Rib-5-P), respectively. This is Phosphopentomutase from Escherichia coli O127:H6 (strain E2348/69 / EPEC).